The following is a 433-amino-acid chain: MPEYVNWLRHASPYINAHRDCTFVVMLPGDGVEHPNFGNIVHDLVLLHSLGVRLVLVHGSRPQIEVRLEARGLTPTYHEGMRITDAATLECVIDAVGHLRIAIEARLSMDMASSPMQGSRLRVTSGNFVTARPIGVLEGVDYHHTGEVRRVDRKGINRLLDERSIVLLSPLGYSPTGEIFNLACEDVATRAAIDLGADKLLLFGADLGLIDENGRLVRELRPQQVPAHLQRLGSSNYQAELLDAAAEACRGGVGRSHIVSYAEDGALLTELFTRDGGGTLVAQEQFELVREAAIEDVGGLLDLISPLEEQGILVRRSREVLEREIEQFSVVEREGMIIACAALYQIADSDAGELACLAVNPEYRHGARGDVLLERIQTRARAQGLKTLFVLTTRTAHWFRERGFVPSSVDRLPSARASLYNYQRNSKIFEKAL.

Residues 287-426 enclose the N-acetyltransferase domain; it reads ELVREAAIED…ASLYNYQRNS (140 aa).

The protein belongs to the acetyltransferase family. ArgA subfamily.

Its subcellular location is the cytoplasm. It catalyses the reaction L-glutamate + acetyl-CoA = N-acetyl-L-glutamate + CoA + H(+). It functions in the pathway amino-acid biosynthesis; L-arginine biosynthesis; N(2)-acetyl-L-ornithine from L-glutamate: step 1/4. The chain is Amino-acid acetyltransferase from Pseudomonas fluorescens (strain SBW25).